Here is a 537-residue protein sequence, read N- to C-terminus: Zinc metalloproteinase nas-23 (537 aa).

The N-terminal stretch at 1 to 16 is a signal peptide; sequence MRFLILVLAGSIGIYG. A propeptide spanning residues 17 to 111 is cleaved from the precursor; the sequence is VNLPKIPKLS…EQLDHSRTKR (95 aa). An N-linked (GlcNAc...) asparagine glycan is attached at Asn77. A Peptidase M12A domain is found at 116 to 311; sequence NAMYPKTIWL…AKINRHYNCE (196 aa). 6 disulfide bridges follow: Cys156–Cys310, Cys178–Cys199, Cys314–Cys334, Cys336–Cys345, Cys356–Cys385, and Cys412–Cys433. His207 serves as a coordination point for Zn(2+). Glu208 is a catalytic residue. 2 residues coordinate Zn(2+): His211 and His217. Residues 306 to 346 enclose the EGF-like domain; the sequence is RHYNCEKNCKNKITCLNGGYQHPKNCKICVCPPGYGGSDCK. The 116-residue stretch at 356–471 folds into the CUB domain; it reads CTGVLVAGET…VQLRYSTVDG (116 aa). N-linked (GlcNAc...) asparagine glycosylation occurs at Asn481.

It depends on Zn(2+) as a cofactor. In terms of tissue distribution, expressed in the hypodermis, rectum and to a lesser extent in pharyngeal muscles and intestine.

Its subcellular location is the secreted. Metalloprotease. This is Zinc metalloproteinase nas-23 (nas-23) from Caenorhabditis elegans.